We begin with the raw amino-acid sequence, 658 residues long: Integrator complex subunit 9 (658 aa).

Lys-58 is covalently cross-linked (Glycyl lysine isopeptide (Lys-Gly) (interchain with G-Cter in SUMO2)). Residues 548 to 572 are disordered; it reads DNKHVLQPPPKPTQPTSSKKRKRVN. The short motif at 566 to 570 is the Nuclear localization signal element; it reads KKRKR.

Belongs to the metallo-beta-lactamase superfamily. RNA-metabolizing metallo-beta-lactamase-like family. INTS9 subfamily. As to quaternary structure, component of the Integrator complex, composed of core subunits INTS1, INTS2, INTS3, INTS4, INTS5, INTS6, INTS7, INTS8, INTS9/RC74, INTS10, INTS11/CPSF3L, INTS12, INTS13, INTS14 and INTS15. The core complex associates with protein phosphatase 2A subunits PPP2CA and PPP2R1A, to form the Integrator-PP2A (INTAC) complex. INTS9 is part of the RNA endonuclease subcomplex, composed of INTS4, INTS9, INTS11 and inositol hexakisphosphate (InsP6). Interacts with WDR73; interaction is required for the assembly of the RNA endonuclease subcomplex in the cytoplasm. Interacts with BRAT1; interaction is required for the assembly of the RNA endonuclease subcomplex. Interacts with ESRRB, ESRRB is not a core component of the Integrator complex and this association is a bridge for the interaction with the multiprotein complex Integrator; attracts the transcriptional machinery.

It localises to the nucleus. The protein localises to the cytoplasm. Functionally, component of the integrator complex, a multiprotein complex that terminates RNA polymerase II (Pol II) transcription in the promoter-proximal region of genes. The integrator complex provides a quality checkpoint during transcription elongation by driving premature transcription termination of transcripts that are unfavorably configured for transcriptional elongation: the complex terminates transcription by (1) catalyzing dephosphorylation of the C-terminal domain (CTD) of Pol II subunit POLR2A/RPB1 and SUPT5H/SPT5, (2) degrading the exiting nascent RNA transcript via endonuclease activity and (3) promoting the release of Pol II from bound DNA. The integrator complex is also involved in terminating the synthesis of non-coding Pol II transcripts, such as enhancer RNAs (eRNAs), small nuclear RNAs (snRNAs), telomerase RNAs and long non-coding RNAs (lncRNAs). Mediates recruitment of cytoplasmic dynein to the nuclear envelope, probably as component of the integrator complex. The polypeptide is Integrator complex subunit 9 (Ints9) (Mus musculus (Mouse)).